Reading from the N-terminus, the 79-residue chain is Conotoxin VnMKLT1-01122 (79 aa).

Positions Met1 to Ala22 are cleaved as a signal peptide. The propeptide occupies Asp23–Asn48. Gln51 is modified (pyrrolidone carboxylic acid). Cystine bridges form between Cys53–Cys70, Cys60–Cys74, and Cys69–Cys78.

It belongs to the conotoxin O1 superfamily. In terms of tissue distribution, expressed by the venom duct.

The protein resides in the secreted. This chain is Conotoxin VnMKLT1-01122, found in Conus ventricosus (Mediterranean cone).